Consider the following 277-residue polypeptide: Outer membrane lipoprotein 1 (277 aa).

The first 19 residues, 1–19 (MSFKKILGVALVSALALTA), serve as a signal peptide directing secretion. Residue Cys-20 is the site of N-palmitoyl cysteine attachment. The S-diacylglycerol cysteine moiety is linked to residue Cys-20.

It belongs to the NlpA lipoprotein family.

Its subcellular location is the cell outer membrane. The chain is Outer membrane lipoprotein 1 (plpA) from Mannheimia haemolytica (Pasteurella haemolytica).